A 235-amino-acid chain; its full sequence is 6-carboxyhexanoate--CoA ligase (235 aa).

It belongs to the BioW family. Homodimer. It depends on Mg(2+) as a cofactor.

The enzyme catalyses heptanedioate + ATP + CoA = 6-carboxyhexanoyl-CoA + AMP + diphosphate. It participates in metabolic intermediate metabolism; pimeloyl-CoA biosynthesis; pimeloyl-CoA from pimelate: step 1/1. Catalyzes the transformation of pimelate into pimeloyl-CoA with concomitant hydrolysis of ATP to AMP. This Desulfovibrio desulfuricans (strain ATCC 27774 / DSM 6949 / MB) protein is 6-carboxyhexanoate--CoA ligase.